The following is a 169-amino-acid chain: Ribosome maturation factor RimM (169 aa).

A PRC barrel domain is found at 93-166 (GEHEFYYHEI…RIQITPLPGL (74 aa)).

Belongs to the RimM family. Binds ribosomal protein uS19.

Its subcellular location is the cytoplasm. In terms of biological role, an accessory protein needed during the final step in the assembly of 30S ribosomal subunit, possibly for assembly of the head region. Essential for efficient processing of 16S rRNA. May be needed both before and after RbfA during the maturation of 16S rRNA. It has affinity for free ribosomal 30S subunits but not for 70S ribosomes. In Exiguobacterium sibiricum (strain DSM 17290 / CCUG 55495 / CIP 109462 / JCM 13490 / 255-15), this protein is Ribosome maturation factor RimM.